Here is a 228-residue protein sequence, read N- to C-terminus: Trichome differentiation protein GL1 (228 aa).

HTH myb-type domains are found at residues 11-63 (NQEY…MNYL) and 64-118 (SPNV…SKKL). DNA-binding regions (H-T-H motif) lie at residues 39 to 63 (WNRI…MNYL) and 91 to 114 (WSLI…NTHL).

In terms of assembly, homodimer and heterodimer with MYB82. Interacts directly with GL3 and BHLH2. Part of a complex made of GL1, GL3 or BHLH2, and TTG1. Also interacts with BHLH2/EGL3/MYC146 and BHLH12/MYC1. Interacts with MYB82. Expressed in leaves, stems and flowers. Expressed in trichome cells and in leaf primordia.

Its subcellular location is the nucleus. Its function is as follows. Transcription activator, when associated with BHLH2/EGL3/MYC146 or BHLH12/MYC1. Involved in epidermal cell fate specification in leaves. Together with TTG1 and GL3, promotes trichome formation and endoreplication. Regulates the production of a signal that induces hair (trichome) precursor cells on leaf primordia to differentiate. Binds to the WER-binding sites (WBS) promoter regions and activates the transcription of target genes. The sequence is that of Trichome differentiation protein GL1 from Arabidopsis thaliana (Mouse-ear cress).